A 123-amino-acid polypeptide reads, in one-letter code: Protein Wnt-7b (123 aa).

Serine 1 carries O-palmitoleoyl serine; by PORCN lipidation. The tract at residues 33–61 (VEVVRASRLRQPTFLKIKQIRSYQKPMET) is disordered linker. Cysteine 89 and cysteine 104 are oxidised to a cystine. An N-linked (GlcNAc...) asparagine glycan is attached at asparagine 90.

Belongs to the Wnt family. Palmitoleoylation is required for efficient binding to frizzled receptors. Depalmitoleoylation leads to Wnt signaling pathway inhibition.

It localises to the secreted. It is found in the extracellular space. Its subcellular location is the extracellular matrix. Functionally, ligand for members of the frizzled family of seven transmembrane receptors that functions in the canonical Wnt/beta-catenin signaling pathway. Required for normal fusion of the chorion and the allantois during placenta development. Required for central nervous system (CNS) angiogenesis and blood-brain barrier regulation. This chain is Protein Wnt-7b (WNT-7B), found in Sceloporus occidentalis (Western fence lizard).